A 234-amino-acid chain; its full sequence is NLP effector protein Pc576423 (234 aa).

Residues 1-18 (MNLRAIAVTFATFAGANA) form the signal peptide. N-linked (GlcNAc...) asparagine glycans are attached at residues asparagine 35 and asparagine 66. Positions 119–125 (GHRHDWE) match the Hepta-peptide GHRHDWE motif motif.

It belongs to the Necrosis inducing protein (NPP1) family.

The protein localises to the secreted. Functionally, secreted effector that contributes strongly to virulence during infection by P.capsici. The protein is NLP effector protein Pc576423 of Phytophthora capsici.